The following is a 572-amino-acid chain: Enolase 4 (572 aa).

The interval 181-204 is disordered; sequence IEPVPSPVTSPALGKKKGSGKGKK. A compositionally biased stretch (basic residues) spans 194–204; the sequence is GKKKGSGKGKK. Glu288 provides a ligand contact to substrate. Lys468 (proton acceptor) is an active-site residue. Residue Lys519 coordinates substrate.

This sequence belongs to the enolase family.

It catalyses the reaction (2R)-2-phosphoglycerate = phosphoenolpyruvate + H2O. It functions in the pathway carbohydrate degradation; glycolysis; pyruvate from D-glyceraldehyde 3-phosphate: step 4/5. The protein is Enolase 4 (eno4) of Xenopus laevis (African clawed frog).